The primary structure comprises 131 residues: Profilin-10 (131 aa).

Cys-13 and Cys-115 form a disulfide bridge. Residues 81 to 97 (AVIRGKKGAGGITIKKT) carry the Involved in PIP2 interaction motif. Thr-111 is modified (phosphothreonine).

It belongs to the profilin family. In terms of assembly, occurs in many kinds of cells as a complex with monomeric actin in a 1:1 ratio. In terms of processing, phosphorylated by MAP kinases.

Its subcellular location is the cytoplasm. It is found in the cytoskeleton. Binds to actin and affects the structure of the cytoskeleton. At high concentrations, profilin prevents the polymerization of actin, whereas it enhances it at low concentrations. The sequence is that of Profilin-10 from Phleum pratense (Common timothy).